The sequence spans 66 residues: Large ribosomal subunit protein bL31 (66 aa).

Zn(2+) contacts are provided by cysteine 16, cysteine 18, cysteine 36, and cysteine 39.

Belongs to the bacterial ribosomal protein bL31 family. Type A subfamily. Part of the 50S ribosomal subunit. Zn(2+) is required as a cofactor.

In terms of biological role, binds the 23S rRNA. The polypeptide is Large ribosomal subunit protein bL31 (Moorella thermoacetica (strain ATCC 39073 / JCM 9320)).